A 563-amino-acid chain; its full sequence is GTPase Obg (563 aa).

In terms of domain architecture, Obg spans 2–168 (SDFVDRVTVH…RDVILELKSI (167 aa)). One can recognise an OBG-type G domain in the interval 169–349 (ADVALVGFPS…LNWALADLVT (181 aa)). GTP-binding positions include 175 to 182 (GFPSAGKS), 200 to 204 (FTTLV), 221 to 224 (DVPG), 301 to 304 (NKVD), and 330 to 332 (STA). Positions 182 and 202 each coordinate Mg(2+). The 87-residue stretch at 383–469 (DEGGNALDFT…DRAVEFDWDP (87 aa)) folds into the OCT domain. The tract at residues 525 to 563 (MMAERKAGHWADPSVDDDRHDETSLFGRGETADDEDVEQ) is disordered.

This sequence belongs to the TRAFAC class OBG-HflX-like GTPase superfamily. OBG GTPase family. Monomer. The cofactor is Mg(2+).

It localises to the cytoplasm. An essential GTPase which binds GTP, GDP and possibly (p)ppGpp with moderate affinity, with high nucleotide exchange rates and a fairly low GTP hydrolysis rate. Plays a role in control of the cell cycle, stress response, ribosome biogenesis and in those bacteria that undergo differentiation, in morphogenesis control. The chain is GTPase Obg from Bifidobacterium adolescentis (strain ATCC 15703 / DSM 20083 / NCTC 11814 / E194a).